The following is a 213-amino-acid chain: Uracil phosphoribosyltransferase (213 aa).

5-phospho-alpha-D-ribose 1-diphosphate-binding positions include Arg78, Arg103, and Asp130 to Ser138. Residues Ile193 and Gly198–Ala200 each bind uracil. Position 199 (Asp199) interacts with 5-phospho-alpha-D-ribose 1-diphosphate.

It belongs to the UPRTase family. The cofactor is Mg(2+).

The catalysed reaction is UMP + diphosphate = 5-phospho-alpha-D-ribose 1-diphosphate + uracil. It participates in pyrimidine metabolism; UMP biosynthesis via salvage pathway; UMP from uracil: step 1/1. Its activity is regulated as follows. Allosterically activated by GTP. Functionally, catalyzes the conversion of uracil and 5-phospho-alpha-D-ribose 1-diphosphate (PRPP) to UMP and diphosphate. This chain is Uracil phosphoribosyltransferase, found in Bordetella pertussis (strain Tohama I / ATCC BAA-589 / NCTC 13251).